The sequence spans 415 residues: uncharacterized protein (415 aa).

Disordered regions lie at residues 329-351 and 388-415; these read KFNKPNNDDLQNESGDDSETESS and KSMMNKSESNKKSNRKSNKRSNKNIITL. The span at 338 to 348 shows a compositional bias: acidic residues; that stretch reads LQNESGDDSET. Residues 399–409 are compositionally biased toward basic residues; that stretch reads KSNRKSNKRSN.

This is an uncharacterized protein from Acanthamoeba polyphaga mimivirus (APMV).